We begin with the raw amino-acid sequence, 98 residues long: Integration host factor subunit alpha (98 aa).

The segment at Gly-50–Ile-71 is disordered.

It belongs to the bacterial histone-like protein family. Heterodimer of an alpha and a beta chain.

In terms of biological role, this protein is one of the two subunits of integration host factor, a specific DNA-binding protein that functions in genetic recombination as well as in transcriptional and translational control. This chain is Integration host factor subunit alpha, found in Proteus mirabilis (strain HI4320).